We begin with the raw amino-acid sequence, 388 residues long: S-adenosylmethionine synthase (388 aa).

Position 17 (histidine 17) interacts with ATP. Aspartate 19 lines the Mg(2+) pocket. Glutamate 45 contributes to the K(+) binding site. Residues glutamate 58 and glutamine 102 each contribute to the L-methionine site. Residues 102–112 (QSADIAQGVDA) form a flexible loop region. ATP contacts are provided by residues 167 to 169 (DSK), 232 to 233 (RF), aspartate 241, 247 to 248 (RK), alanine 264, and lysine 268. Aspartate 241 provides a ligand contact to L-methionine. Lysine 272 contacts L-methionine.

The protein belongs to the AdoMet synthase family. In terms of assembly, homotetramer; dimer of dimers. Mg(2+) is required as a cofactor. It depends on K(+) as a cofactor.

The protein localises to the cytoplasm. It catalyses the reaction L-methionine + ATP + H2O = S-adenosyl-L-methionine + phosphate + diphosphate. It functions in the pathway amino-acid biosynthesis; S-adenosyl-L-methionine biosynthesis; S-adenosyl-L-methionine from L-methionine: step 1/1. Functionally, catalyzes the formation of S-adenosylmethionine (AdoMet) from methionine and ATP. The overall synthetic reaction is composed of two sequential steps, AdoMet formation and the subsequent tripolyphosphate hydrolysis which occurs prior to release of AdoMet from the enzyme. The sequence is that of S-adenosylmethionine synthase from Paramagnetospirillum magneticum (strain ATCC 700264 / AMB-1) (Magnetospirillum magneticum).